The following is a 272-amino-acid chain: MARLAAFDMDGTLLMPEHHLGRETIATLARLRERDITLTFATGRHVLEMRHILGTLSLDAYLITGNGTRIHSLEGDVLHRQDLDPQVADTVMHHAWDTRASMHVFNDNGWFTGQEIPALLQAHVYSGFRYQVIDIKSIPAHQVTKICFCGDHDDLIRLRIQLNEALEERAHLCFSAVDCLEVLPLGCNKGSALAVLSNHLGLSLADCMAFGDAMNDREMLGSVGRGLIMGNAMPQLIAALPHLSVIGHCGNQAVSHFLTHWLDNPHLPYSPE.

The Nucleophile role is filled by aspartate 8. Mg(2+) is bound by residues aspartate 8, aspartate 10, and aspartate 212.

Belongs to the HAD-like hydrolase superfamily. Cof family. Mg(2+) is required as a cofactor.

It catalyses the reaction 4-amino-2-methyl-5-(diphosphooxymethyl)pyrimidine + H2O = 4-amino-2-methyl-5-(phosphooxymethyl)pyrimidine + phosphate + H(+). Its function is as follows. Catalyzes the hydrolysis of 4-amino-2-methyl-5-hydroxymethylpyrimidine pyrophosphate (HMP-PP) to 4-amino-2-methyl-5-hydroxymethylpyrimidine phosphate (HMP-P). This is HMP-PP phosphatase from Salmonella agona (strain SL483).